The following is an 80-amino-acid chain: SPbeta prophage-derived thioredoxin-like protein YosR (80 aa).

The 80-residue stretch at Met-1 to Arg-80 folds into the Thioredoxin domain. An intrachain disulfide couples Cys-11 to Cys-14.

It belongs to the thioredoxin family.

The chain is SPbeta prophage-derived thioredoxin-like protein YosR (yosR) from Bacillus subtilis (strain 168).